The following is a 497-amino-acid chain: Cysteine--tRNA ligase (497 aa).

Residue Cys46 participates in Zn(2+) binding. Positions Pro48–His58 match the 'HIGH' region motif. 3 residues coordinate Zn(2+): Cys237, His262, and Glu266. The 'KMSKS' region motif lies at Lys293–Ser297. Lys296 lines the ATP pocket.

Belongs to the class-I aminoacyl-tRNA synthetase family. Monomer. Requires Zn(2+) as cofactor.

Its subcellular location is the cytoplasm. It carries out the reaction tRNA(Cys) + L-cysteine + ATP = L-cysteinyl-tRNA(Cys) + AMP + diphosphate. This Deinococcus geothermalis (strain DSM 11300 / CIP 105573 / AG-3a) protein is Cysteine--tRNA ligase.